A 212-amino-acid chain; its full sequence is Large ribosomal subunit protein uL3 (212 aa).

Positions 119 to 147 are disordered; the sequence is YQGNIKRWGQSRGPETHGSRYHRIPGSMG.

It belongs to the universal ribosomal protein uL3 family. As to quaternary structure, part of the 50S ribosomal subunit. Forms a cluster with proteins L14 and L19.

Its function is as follows. One of the primary rRNA binding proteins, it binds directly near the 3'-end of the 23S rRNA, where it nucleates assembly of the 50S subunit. The polypeptide is Large ribosomal subunit protein uL3 (Lactobacillus acidophilus (strain ATCC 700396 / NCK56 / N2 / NCFM)).